Consider the following 448-residue polypeptide: Tapasin (448 aa).

Positions 1–20 are cleaved as a signal peptide; the sequence is MKSLSLLLAVALGLATAVSA. Topologically, residues 21–414 are lumenal; that stretch reads GPAVIECWFV…LSGPSLEDSI (394 aa). Cysteine 27 and cysteine 91 are disulfide-bonded. N-linked (GlcNAc...) asparagine glycosylation occurs at asparagine 253. One can recognise an Ig-like C1-type domain in the interval 292–399; it reads PKVSLMPATL…PASGRSAEVT (108 aa). Cysteine 315 and cysteine 382 are oxidised to a cystine. The chain crosses the membrane as a helical span at residues 415 to 435; the sequence is GLFLSAFFLLGLFKALGWAAV. Residues 436-448 lie on the Cytoplasmic side of the membrane; that stretch reads YLSTCKDSKKKAE.

As to quaternary structure, heterodimer with PDIA3; disulfide-linked. Obligatory mediator for the interaction between newly assembled MHC class I molecules, calreticulin, PDIA3 and TAP. Up to 4 MHC class I/tapasin complexes bind to 1 TAP. Interacts with HLA-G-B2M complex; this interaction is required for loading of high affinity peptides. On its own or as part of MHC class I peptide loading complex, interacts with ligand-free MR1 or MR1-B2M complex, providing for stable MR1 pools ready for metabolite antigen processing.

The protein resides in the endoplasmic reticulum membrane. Functionally, involved in the association of MHC class I with transporter associated with antigen processing (TAP) and in the assembly of MHC class I with peptide (peptide loading). The polypeptide is Tapasin (TAPBP) (Chlorocebus aethiops (Green monkey)).